A 119-amino-acid chain; its full sequence is Small ribosomal subunit protein eS25 (119 aa).

Residues 1–42 (MPPKKDTKASAKQPQKTQKKKEGSGGGKAKKKKWSKGKVRDK) are disordered. Positions 28–37 (KAKKKKWSKG) are enriched in basic residues.

Belongs to the eukaryotic ribosomal protein eS25 family.

The sequence is that of Small ribosomal subunit protein eS25 (RpS25) from Spodoptera frugiperda (Fall armyworm).